A 309-amino-acid polypeptide reads, in one-letter code: Ribosomal RNA small subunit methyltransferase H (309 aa).

Residues 33–35, D53, F79, D100, and Q107 contribute to the S-adenosyl-L-methionine site; that span reads GGH.

The protein belongs to the methyltransferase superfamily. RsmH family.

It is found in the cytoplasm. The catalysed reaction is cytidine(1402) in 16S rRNA + S-adenosyl-L-methionine = N(4)-methylcytidine(1402) in 16S rRNA + S-adenosyl-L-homocysteine + H(+). In terms of biological role, specifically methylates the N4 position of cytidine in position 1402 (C1402) of 16S rRNA. The sequence is that of Ribosomal RNA small subunit methyltransferase H from Clostridium botulinum (strain Langeland / NCTC 10281 / Type F).